We begin with the raw amino-acid sequence, 152 residues long: Large ribosomal subunit protein bL9 (152 aa).

Belongs to the bacterial ribosomal protein bL9 family.

Its function is as follows. Binds to the 23S rRNA. This Coxiella burnetii (strain Dugway 5J108-111) protein is Large ribosomal subunit protein bL9.